The sequence spans 144 residues: Actin-associated protein FAM107A (144 aa).

A coiled-coil region spans residues 70–90 (VLEHRRRNQLIKKKEEELEAK). Positions 74 to 84 (RRRNQLIKKKE) match the Nuclear localization signal motif. The disordered stretch occupies residues 104 to 123 (QQRLNQLENPPQRDEDHAPE). Residues 114–123 (PQRDEDHAPE) show a composition bias toward basic and acidic residues.

Interacts with ACTB. Interacts with F-actin. Interacts with PRDX1. Interacts with COMMD1; this interaction stabilizes COMMD1 in the nucleus. Interacts with MAP1A. Expressed in septum, the neocortex, the CA3 region of the hippocampus and the cerebellum (at protein level).

The protein localises to the nucleus. It localises to the cytoplasm. The protein resides in the cytoskeleton. It is found in the stress fiber. Its subcellular location is the cell junction. The protein localises to the focal adhesion. It localises to the cell projection. The protein resides in the ruffle membrane. It is found in the synapse. Stress-inducible actin-binding protein that plays a role in synaptic and cognitive functions by modulating actin filamentous (F-actin) dynamics. Mediates polymerization of globular actin to F-actin. Also binds to, stabilizes and bundles F-actin. Involved in synaptic function by regulating neurite outgrowth in an actin-dependent manner and for the acquisition of hippocampus-dependent cognitive function, such as learning and long-term memory. Plays a role in the actin and microtubule cytoskeleton organization; negatively regulates focal adhesion (FA) assembly promoting malignant glial cell migration in an actin-, microtubule- and MAP1A-dependent manner. Also involved in neuroblastoma G1/S phase cell cycle progression and cell proliferation inhibition by stimulating ubiquitination of NF-kappa-B subunit RELA and NF-kappa-B degradation in a COMMD1- and actin-dependent manner. May play a role in tumor development. In Mus musculus (Mouse), this protein is Actin-associated protein FAM107A.